The following is a 49-amino-acid chain: Large ribosomal subunit protein bL33 (49 aa).

It belongs to the bacterial ribosomal protein bL33 family.

The protein is Large ribosomal subunit protein bL33 of Lacticaseibacillus casei (strain BL23) (Lactobacillus casei).